Consider the following 192-residue polypeptide: MKLLEDRIKKDGEVLDGDVLKINSFLNHQVDPQLMMQCGEEFKRLFADQKIDKVLTCEASGIAPGVMTAYVLDVPMVFARKKKPSTLNDAVYWADVFSYTKKVNNKICVEEKLLHKGENLLIIDDFVAQGEAVKGMVNIAKQAECNIVGVGAVVAKTFQGGSDWVKQHGLHFEALASIDSFKDGQVHFGKEN.

The xanthine site is built by Leu20 and Asn27. 128 to 132 lines the 5-phospho-alpha-D-ribose 1-diphosphate pocket; sequence AQGEA. A xanthine-binding site is contributed by Lys156.

It belongs to the purine/pyrimidine phosphoribosyltransferase family. Xpt subfamily. Homodimer.

It localises to the cytoplasm. It carries out the reaction XMP + diphosphate = xanthine + 5-phospho-alpha-D-ribose 1-diphosphate. Its pathway is purine metabolism; XMP biosynthesis via salvage pathway; XMP from xanthine: step 1/1. Converts the preformed base xanthine, a product of nucleic acid breakdown, to xanthosine 5'-monophosphate (XMP), so it can be reused for RNA or DNA synthesis. The sequence is that of Xanthine phosphoribosyltransferase from Lactobacillus helveticus (strain DPC 4571).